The sequence spans 354 residues: Peptide chain release factor 1 (354 aa).

An N5-methylglutamine modification is found at Gln-230.

It belongs to the prokaryotic/mitochondrial release factor family. In terms of processing, methylated by PrmC. Methylation increases the termination efficiency of RF1.

It is found in the cytoplasm. Its function is as follows. Peptide chain release factor 1 directs the termination of translation in response to the peptide chain termination codons UAG and UAA. The chain is Peptide chain release factor 1 from Thermus thermophilus (strain ATCC BAA-163 / DSM 7039 / HB27).